The sequence spans 102 residues: LSTLNTHNLPLLRLVYLEREDLVAVHVDDLNNQANQLDQKLDGGLLPQGHAPHWLMNAHSLFYLTRLLVAQCRAPKGMLVVLPAGVAHWCLNDGKHYLDNPR.

The protein belongs to the 11S seed storage protein (globulins) family.

Its function is as follows. Seed storage protein. In Macadamia integrifolia (Macadamia nut), this protein is Legumin-like protein Mac i 2.